Reading from the N-terminus, the 207-residue chain is Large ribosomal subunit protein uL4 (207 aa).

Residues 49–78 (HAVKNRSAVRGGGRKPWRQKGTGRARQGSI) form a disordered region. A compositionally biased stretch (basic residues) spans 60 to 71 (GGRKPWRQKGTG).

The protein belongs to the universal ribosomal protein uL4 family. Part of the 50S ribosomal subunit.

Functionally, one of the primary rRNA binding proteins, this protein initially binds near the 5'-end of the 23S rRNA. It is important during the early stages of 50S assembly. It makes multiple contacts with different domains of the 23S rRNA in the assembled 50S subunit and ribosome. Its function is as follows. Forms part of the polypeptide exit tunnel. The polypeptide is Large ribosomal subunit protein uL4 (Latilactobacillus sakei subsp. sakei (strain 23K) (Lactobacillus sakei subsp. sakei)).